The sequence spans 272 residues: MARLAAFDMDGTLLMPDHHLGEKTLSTLARLRERDITLTFATGRHALEMQHILGALSLDAYLITGNGTRVHSLEGELLHRDDLPADVAELVLYQQWDTRASMHIFNDDGWFTGKEIPALLQAFVYSGFRYQIIDVKKMPLGRVTKICFCGGHDDLTRLQIQLYEALGERAHLCFSATDCLEVLPVGCNKGAALTVLTQHLGLSLRDCMAFGDAMNDREMLGSVGSGFIMGNAMPQLRAELPHLPVIGHCRNQAVSHYLTHWLDYPHLPYSPE.

The active-site Nucleophile is the aspartate 8. Positions 8, 10, and 212 each coordinate Mg(2+).

It belongs to the HAD-like hydrolase superfamily. Cof family. Requires Mg(2+) as cofactor.

The catalysed reaction is 4-amino-2-methyl-5-(diphosphooxymethyl)pyrimidine + H2O = 4-amino-2-methyl-5-(phosphooxymethyl)pyrimidine + phosphate + H(+). Catalyzes the hydrolysis of 4-amino-2-methyl-5-hydroxymethylpyrimidine pyrophosphate (HMP-PP) to 4-amino-2-methyl-5-hydroxymethylpyrimidine phosphate (HMP-P). This chain is HMP-PP phosphatase, found in Escherichia coli (strain 55989 / EAEC).